Reading from the N-terminus, the 20-residue chain is Cytochrome c oxidase subunit 8B, mitochondrial (20 aa).

This sequence belongs to the cytochrome c oxidase VIII family. In terms of assembly, component of the cytochrome c oxidase (complex IV, CIV), a multisubunit enzyme composed of 14 subunits. The complex is composed of a catalytic core of 3 subunits MT-CO1, MT-CO2 and MT-CO3, encoded in the mitochondrial DNA, and 11 supernumerary subunits COX4I, COX5A, COX5B, COX6A, COX6B, COX6C, COX7A, COX7B, COX7C, COX8 and NDUFA4, which are encoded in the nuclear genome. The complex exists as a monomer or a dimer and forms supercomplexes (SCs) in the inner mitochondrial membrane with NADH-ubiquinone oxidoreductase (complex I, CI) and ubiquinol-cytochrome c oxidoreductase (cytochrome b-c1 complex, complex III, CIII), resulting in different assemblies (supercomplex SCI(1)III(2)IV(1) and megacomplex MCI(2)III(2)IV(2)).

The protein resides in the mitochondrion inner membrane. It functions in the pathway energy metabolism; oxidative phosphorylation. Functionally, component of the cytochrome c oxidase, the last enzyme in the mitochondrial electron transport chain which drives oxidative phosphorylation. The respiratory chain contains 3 multisubunit complexes succinate dehydrogenase (complex II, CII), ubiquinol-cytochrome c oxidoreductase (cytochrome b-c1 complex, complex III, CIII) and cytochrome c oxidase (complex IV, CIV), that cooperate to transfer electrons derived from NADH and succinate to molecular oxygen, creating an electrochemical gradient over the inner membrane that drives transmembrane transport and the ATP synthase. Cytochrome c oxidase is the component of the respiratory chain that catalyzes the reduction of oxygen to water. Electrons originating from reduced cytochrome c in the intermembrane space (IMS) are transferred via the dinuclear copper A center (CU(A)) of subunit 2 and heme A of subunit 1 to the active site in subunit 1, a binuclear center (BNC) formed by heme A3 and copper B (CU(B)). The BNC reduces molecular oxygen to 2 water molecules using 4 electrons from cytochrome c in the IMS and 4 protons from the mitochondrial matrix. The chain is Cytochrome c oxidase subunit 8B, mitochondrial from Thunnus obesus (Bigeye tuna).